Here is a 657-residue protein sequence, read N- to C-terminus: Histidine ammonia-lyase (657 aa).

Positions 253–255 (ASG) form a cross-link, 5-imidazolinone (Ala-Gly). 2,3-didehydroalanine (Ser) is present on serine 254. Residue threonine 396 is modified to Phosphothreonine. Serine 635 carries the phosphoserine modification. Position 637 is a phosphothreonine (threonine 637). Position 648 is a phosphoserine (serine 648).

This sequence belongs to the PAL/histidase family. In terms of processing, contains an active site 4-methylidene-imidazol-5-one (MIO), which is formed autocatalytically by cyclization and dehydration of residues Ala-Ser-Gly. In terms of tissue distribution, liver and skin.

The catalysed reaction is L-histidine = trans-urocanate + NH4(+). Its pathway is amino-acid degradation; L-histidine degradation into L-glutamate; N-formimidoyl-L-glutamate from L-histidine: step 1/3. The protein is Histidine ammonia-lyase (Hal) of Rattus norvegicus (Rat).